The primary structure comprises 125 residues: Small ribosomal subunit protein eS8 (125 aa).

It belongs to the eukaryotic ribosomal protein eS8 family. As to quaternary structure, part of the 30S ribosomal subunit.

The protein is Small ribosomal subunit protein eS8 of Methanosphaerula palustris (strain ATCC BAA-1556 / DSM 19958 / E1-9c).